A 358-amino-acid chain; its full sequence is Transmembrane protein 144 homolog B (358 aa).

The next 10 membrane-spanning stretches (helical) occupy residues 6–26 (VIGY…YVPV), 35–55 (LAFT…AMFI), 60–79 (IFDP…NFCV), 86–108 (IGIG…FTGK), 122–142 (PALN…FFFI), 211–231 (ILGI…MVPM), 244–264 (LSFV…VFIV), 279–299 (IFPS…LMVA), 307–327 (IGFP…SVFY), and 337–357 (LLIL…LALS).

Belongs to the TMEM144 family.

It is found in the membrane. This is Transmembrane protein 144 homolog B (tmem144B) from Dictyostelium discoideum (Social amoeba).